The following is a 1264-amino-acid chain: Imitation switch two complex protein 1 (1264 aa).

The WAC domain maps to 23–130 (VQVWHIEETG…GEVVYLRKQK (108 aa)). 5 disordered regions span residues 130-153 (KDSSTTSSNSQQSTPQPDDMVEIN), 275-374 (PVVA…PANA), 482-508 (QEIENNGLPMKNKAETTTEEDSENPSD), 627-655 (ATEVQKESDAKNETNSESDSKSDSDSEER), and 803-825 (LNKTDENTPSADGADKKDDSESN). Residues 132-147 (SSTTSSNSQQSTPQPD) are compositionally biased toward low complexity. Composition is skewed to polar residues over residues 280–289 (RSNSANVSSP) and 299–310 (KSSGKSNTSNDA). The DDT domain maps to 423–483 (FDSFGKLLQA…IRTQTSKEQE (61 aa)).

As to quaternary structure, component of the ISW2 complex, which at least consists of ISW2, ITC1, DLS1 and DPB4. May form a stable subcomplex with ISW2.

It is found in the nucleus. Functionally, functions as a component of the ISW2 complex, which acts in remodeling the chromatin by catalyzing an ATP-dependent alteration in the structure of nucleosomal DNA. The ISW2 complex is involved in coordinating transcriptional repression and in inheritance of telomeric silencing. It is involved in repression of MAT a-specific genes, INO1, and early meiotic genes during mitotic growth dependent upon transcription factor UME6 and in a parallel pathway to the RPD3-SIN3 histone deacetylase complex. ITC1 is required for nucleosome-stimulated ATPase activity and chromatin-remodeling activity of the complex. Required for the repression of MATa a-specific genes. This Saccharomyces cerevisiae (strain ATCC 204508 / S288c) (Baker's yeast) protein is Imitation switch two complex protein 1 (ITC1).